The sequence spans 332 residues: Phenylalanine--tRNA ligase alpha subunit (332 aa).

Glutamate 254 contributes to the Mg(2+) binding site.

It belongs to the class-II aminoacyl-tRNA synthetase family. Phe-tRNA synthetase alpha subunit type 1 subfamily. Tetramer of two alpha and two beta subunits. It depends on Mg(2+) as a cofactor.

The protein localises to the cytoplasm. It catalyses the reaction tRNA(Phe) + L-phenylalanine + ATP = L-phenylalanyl-tRNA(Phe) + AMP + diphosphate + H(+). The chain is Phenylalanine--tRNA ligase alpha subunit from Hydrogenovibrio crunogenus (strain DSM 25203 / XCL-2) (Thiomicrospira crunogena).